The sequence spans 31 residues: Cyclopsychotride-A (31 aa).

The segment at residues 1–31 (SIPCGESCVFIPCTVTALLGCSCKSKVCYKN) is a cross-link (cyclopeptide (Ser-Asn)). 3 disulfide bridges follow: C4/C21, C8/C23, and C13/C28.

This sequence belongs to the cyclotide family. Bracelet subfamily. This is a cyclic peptide.

Probably participates in a plant defense mechanism. Has antibiotic activity. Inhibits the cytopathic effects and replication of the human immunodeficiency virus. Active against both Gram-positive and Gram-negative bacteria. This Psychotria longipes protein is Cyclopsychotride-A.